The primary structure comprises 865 residues: MEGIHHGGHGGARPSQSMAFPGFDADSHMMSDDFTFDSPFSSSGSSNANDGVLGNSIFPEWTNGAPRGESPDEMQRKDPLAAQIWKLYTRTKSQLPNQERMENLTWRMMAMNLKRKEREQQEREQQARASETVSPAPSGIEMRISDQVSSAGPDLSHDMNLDGTSDAMNLDDFIIPFDSPAEHPSHPSADRQFTATPTGSIPIKSRKDAMMEQSTAASFPRAPQDQRTNSEFGYVARRVRKTSVDERQFFAGLSVPTRKRPAEASPQVPPVSNAIVAALGIVSGLPDYSLDHPPSAFALPGNGTVGPRRPQHHHTHSNIPYGLDTYGLNEDHGINSAGPYQQNFHFSPSESPMTAGNPFSRLYTQTPLASSLNSTEFFSPPPSGYQSTVSTPQPIYEGEQSIFFSDAPSAESHSQRRIPNYIQQRQSNLSASLQPRYMYNMNGDSHQGNAVTGPPTTHVSGFSVPQPQHVNPAQVLGHGEFSTTAPATSMFTFGGDSDNEDDDGNFERGRMTMPNDFASMDESGDMSAGLHWDGGFPGSVQSLPGFSAQHRKHVTIGSTDMMDGPPEWNQGGTLGRGHGSVASVSDVRNQNQDPRRYGKVPRTASTPNAAALLRQSLNGSASGPPTNHPSPSTPPESGLSSAVPSRPGSPGGSKNGDPNAGPTTCTNCFTQTTPLWRRNPEGQPLCNACGLFLKLHGVVRPLSLKTDVIKKRNRSSANTLAVGTSRSSKKSSRKNSIQHAPSTSISSRINTSESPPSMTGSNTLGKPGVVPIAAAPPKSGPPAGVAQGRAGVQVAPRRQRRLEKAPIGSDQDPDDSPKSAAPTSRSKVVPLAPAMAPPAAANPANHSIAGGQGASQEWEWLTMSL.

Disordered stretches follow at residues 1–75 (MEGI…DEMQ), 115–140 (RKER…PSGI), 177–227 (FDSP…QDQR), 557–605 (GSTD…RTAS), and 617–663 (LNGS…AGPT). Low complexity predominate over residues 32-46 (DDFTFDSPFSSSGSS). 2 stretches are compositionally biased toward basic and acidic residues: residues 115–126 (RKEREQQEREQQ) and 180–189 (PAEHPSHPSA). Positions 582 to 592 (ASVSDVRNQNQ) are enriched in polar residues. Residues 665–689 (CTNCFTQTTPLWRRNPEGQPLCNAC) form a GATA-type zinc finger. The interval 713 to 854 (NRSSANTLAV…NHSIAGGQGA (142 aa)) is disordered. 2 stretches are compositionally biased toward polar residues: residues 715-724 (SSANTLAVGT) and 737-764 (IQHA…SNTL). 2 stretches are compositionally biased toward low complexity: residues 771–786 (PIAA…AGVA) and 830–844 (PLAP…ANPA).

Its subcellular location is the nucleus. Functionally, major nitrogen regulatory protein. In Penicillium urticae, this protein is Nitrogen regulatory protein nrfA (nrfA).